The chain runs to 867 residues: MSSLDPSPATSTQQQKQLESLVNLLTQGSRFYRKAYNELFSGVTTEQDPDSSTNIPEYMLFGWHLFLMLHLRSPELFKDLVSCIHGLVAVLAILLIHVPAKFRSFTIEGSSHLIKQTEKGVDLIASLCHNYHTSEERLKEMLHKSHNAIEDIFHMKALSASECKPENLDKIDTDDLMYFKGLIDMECFQSNLEKMEKLCNSNSCKGELDFKSILINNDYIPYDENSTGDSTNLGHSKCAFETLASPTKTIKNMLTVPSSPLSPATGGSVKIVQMTPVTSAMTTAKWLREVISSLPDKPSSKLQQFLSSCDRDLTNAVTERVSIVLEAIFPTKSSANRGVSLGLNCANAFDIPWAEARKVEASKLYYRVLEAICRAELQNSNVNNLTPLLSNERFHRCLIACSADLVLATHKTVIMMFPAVLESTGLTAFDLSKIIENFVRHEETLPRELKRHLNSLEEQLLESMAWEKGSSLYNSLIVARPSVASEINRLGLLAEPMPSLDDLVSRQNVRIEGLPATPSKKRAAGPDDNADPRSPKRSCNESRNTVVERNLQTPPPKQSHMVSTSLKAKCHPLQSTFASPTVCNPVGGNEKCADVTIHIFFSKILKLAAIRIRNLCERVQCVEQTERVYNVFKQILEQQTTLFFNRHIDQLILCCLYGVAKVCQLELTFREILNNYKREAQCKPEVFSSIYIGSTNRNGVLVSRHVGIITFYNEVFVPAAKPFLVSLISSGTHPEDKKNASGQIPGSPKPSPFPNLPDMSPKKVSASHNVYVSPLRQTKLDLLLSPSSRSFYACIGEGTHAYQSPSKDLAAINSRLNYNGRKVNSRLNFDMVSDSVVAGSLGQINGGSTSDPAAAFSPLSKKRETDT.

The domain A stretch occupies residues 275–476 (TPVTSAMTTA…EKGSSLYNSL (202 aa)). The segment at 275-722 (TPVTSAMTTA…NEVFVPAAKP (448 aa)) is pocket; binds RPD3I and RBAP1. Residues 477 to 594 (IVARPSVASE…PVGGNEKCAD (118 aa)) form a spacer region. Residues 512–563 (EGLPATPSKKRAAGPDDNADPRSPKRSCNESRNTVVERNLQTPPPKQSHMVS) are disordered. The segment covering 530–540 (ADPRSPKRSCN) has biased composition (basic and acidic residues). Over residues 541 to 552 (ESRNTVVERNLQ) the composition is skewed to polar residues. The domain B stretch occupies residues 595–722 (VTIHIFFSKI…NEVFVPAAKP (128 aa)). Disordered regions lie at residues 734–762 (PEDK…MSPK) and 843–867 (QING…ETDT).

Belongs to the retinoblastoma protein (RB) family. Interacts with RPD3I, RBAP1, the Arabidopsis cyclin CYCD3-1, the mastrevirus replication-associated protein A (RepA) and the begomovirus replication-associated protein (Rep). Ubiquitous.

It is found in the nucleus. Regulator of biological processes that recruits a histone deacetylase to control gene transcription. May play a role in the entry into mitosis, negatively regulating the cell proliferation. Formation of stable complexes with geminiviridae replication-associated proteins may create a cellular environment which favors viral DNA replication. This is Retinoblastoma-related protein 1 (RBR1) from Zea mays (Maize).